A 574-amino-acid polypeptide reads, in one-letter code: MDNSIHSTDGPDSVIPNSNPKKTVRQRVRLLARHLTTREGLIGDYDYGFLFRPELPFMKKDPRAPPFFGLNEKIPVLLAFILGLQHALAMLAGVVTPPLIISSSLSLPSDLQQYLVSTSLIVCGLLSMVQITRFHIYKTPYYIGSGVLSVMGVSFSIISVASGAFNQMYSNGFCQLDEAGNRLPCPEAYGALIGTSACCALVEILLAFVPPKVIQKIFPPIVTGPTVMLIGISLIGTGFKDWAGGSACMDDGMLCPSATAPRPLPWGSPEFIGLGFLVFVSIILCERFGAPIMKSCSVVIGLLVGCIVAAACGYFSHADIDAAPAASFIWVKTFPLSVYGPMVLPIIAVFIICACECIGDVTATCDVSRLEVRGGTFESRIQGAVLADGINSVVAALATMTPMTTFAQNNGVIALTRCANRWAGYCCCLILIVAGIFAKFAAAIVAIPNSVMGGMKTFLFASVVISGQAIVAKAPFTRRNRFILTASMALGYGATLVPTWFGNVFPQTENRDLEGFENAIELVLETGFAVTAFVAMLLNAIMPAEVEEIGAVTPMPVSAHDNRDGEAEYQSKQA.

Residues 1–20 (MDNSIHSTDGPDSVIPNSNP) form a disordered region. 12 consecutive transmembrane segments (helical) span residues 77–97 (LLAF…VVTP), 111–131 (LQQY…MVQI), 141–161 (YYIG…ISVA), 188–209 (AYGA…LAFV), 217–237 (IFPP…LIGT), 264–284 (LPWG…SIIL), 296–315 (CSVV…CGYF), 338–361 (VYGP…IGDV), 427–447 (CCLI…IVAI), 451–471 (VMGG…QAIV), 482–502 (FILT…TWFG), and 522–542 (LVLE…NAIM). The interval 555–574 (MPVSAHDNRDGEAEYQSKQA) is disordered. Lysine 572 is covalently cross-linked (Glycyl lysine isopeptide (Lys-Gly) (interchain with G-Cter in ubiquitin)).

The protein belongs to the nucleobase:cation symporter-2 (NCS2) (TC 2.A.40) family. Post-translationally, ubiquitinated by hulA. Ubiquitination leads to internalization, sorting into the endosomal pathway to the vacuolar lumen where uapA is eventually degraded.

The protein localises to the cell membrane. Its function is as follows. Uric acid-xanthine transporter. The protein is Uric acid-xanthine permease (uapA) of Emericella nidulans (strain FGSC A4 / ATCC 38163 / CBS 112.46 / NRRL 194 / M139) (Aspergillus nidulans).